A 39-amino-acid chain; its full sequence is Photosystem II reaction center protein X (39 aa).

Residues 10-30 (SSLVWAAVIVVIPAAVALVLI) traverse the membrane as a helical segment.

It belongs to the PsbX family. Type 1 subfamily. As to quaternary structure, PSII is composed of 1 copy each of membrane proteins PsbA, PsbB, PsbC, PsbD, PsbE, PsbF, PsbH, PsbI, PsbJ, PsbK, PsbL, PsbM, PsbT, PsbX, PsbY, Psb30/Ycf12, peripheral proteins PsbO, CyanoQ (PsbQ), PsbU, PsbV and a large number of cofactors. It forms dimeric complexes.

It localises to the cellular thylakoid membrane. Its function is as follows. Involved in the binding and/or turnover of quinones at the Q(B) site of photosystem II (PSII). PSII is a light-driven water plastoquinone oxidoreductase, using light energy to abstract electrons from H(2)O, generating a proton gradient subsequently used for ATP formation. The polypeptide is Photosystem II reaction center protein X (Prochlorococcus marinus (strain MIT 9303)).